The sequence spans 2201 residues: Activating signal cointegrator 1 complex subunit 3 (2201 aa).

Residue Ser12 is modified to Phosphoserine. Coiled coils occupy residues 18–81 and 328–356; these read KQDN…KQIV and IQSE…KAGE. Positions 486–669 constitute a Helicase ATP-binding 1 domain; it reads ETAYNTNENM…FLHVNPCIGL (184 aa). 499 to 506 is an ATP binding site; it reads APTGAGKT. An N6-acetyllysine modification is found at Lys572. The DEVH box signature appears at 611–614; the sequence is DEVH. Residues 696–914 enclose the Helicase C-terminal 1 domain; it reads QLNNMDEVCY…GTVTNVEEAV (219 aa). Residues 978–1287 enclose the SEC63 1 domain; it reads STDLGRTASH…GAEAVCIINF (310 aa). The 176-residue stretch at 1336–1511 folds into the Helicase ATP-binding 2 domain; it reads HTLYHTDCNV…WLNIRQMGLF (176 aa). Position 1349 to 1356 (1349 to 1356) interacts with ATP; that stretch reads APTGSGKT. A DEIH box motif is present at residues 1453 to 1456; it reads DEIH. A Helicase C-terminal 2 domain is found at 1544–1739; that stretch reads PTFQAIRSHS…VLSDHLNAEI (196 aa). Residues 1812–2176 form the SEC63 2 domain; it reads PLTYGRIASY…LGLDQQYDIH (365 aa).

The protein belongs to the helicase family. As to quaternary structure, identified in the ASCC complex that contains ASCC1, ASCC2 and ASCC3. Functions as a scaffolding subunit that interacts directly with both ASCC1 and ASCC2. Interacts directly with ALKBH3, and thereby recruits ALKBH3 to the ASCC complex. Part of the ASC-1/TRIP4 complex, that contains TRIP4, ASCC1, ASCC2 and ASCC3. Part of the RQT (ribosome quality control trigger) complex, that contains ASCC2, ASCC3 and TRIP4. Associates with ribosomes; recruited to collided ribosomes. Interacts with ZCCHC4. Interacts with ZNF598. Interacts with RPS3.

It localises to the nucleus. The protein localises to the nucleus speckle. Its subcellular location is the cytoplasm. It is found in the cytosol. The enzyme catalyses Couples ATP hydrolysis with the unwinding of duplex DNA by translocating in the 3'-5' direction.. It catalyses the reaction ATP + H2O = ADP + phosphate + H(+). Functionally, ATPase involved both in DNA repair and rescue of stalled ribosomes. 3'-5' DNA helicase involved in repair of alkylated DNA: promotes DNA unwinding to generate single-stranded substrate needed for ALKBH3, enabling ALKBH3 to process alkylated N3-methylcytosine (3mC) within double-stranded regions. Also involved in activation of the ribosome quality control (RQC) pathway, a pathway that degrades nascent peptide chains during problematic translation. Drives the splitting of stalled ribosomes that are ubiquitinated in a ZNF598-dependent manner, as part of the ribosome quality control trigger (RQT) complex. Part of the ASC-1 complex that enhances NF-kappa-B, SRF and AP1 transactivation. The chain is Activating signal cointegrator 1 complex subunit 3 (ascc3) from Bos taurus (Bovine).